The chain runs to 292 residues: Protein PHR1-LIKE 3 (292 aa).

In terms of domain architecture, HTH myb-type spans 34-94 (TDPKPRLRWT…HLQKFRLGRQ (61 aa)). Positions 65-90 (PKTIMRTMGVKGLTLYHLKSHLQKFR) form a DNA-binding region, H-T-H motif. Positions 137-157 (TEALRAQMEVQRRLHEQLEVQ) form a coiled coil. The short motif at 150 to 155 (LHEQLE) is the LHEQLE element.

The protein belongs to the MYB-CC family. In terms of assembly, homo- and heterodimers. Interacts with PHL2, but not with PHR1.

It is found in the nucleus. In terms of biological role, transcriptional activator. Probable component of the central regulatory system controlling transcriptional responses to Pi starvation. Binds in a sequence-specific manner to phosphate starvation-regulated promoters. Required for female gametophyte development and function. The protein is Protein PHR1-LIKE 3 of Arabidopsis thaliana (Mouse-ear cress).